The chain runs to 277 residues: Ribosomal RNA small subunit methyltransferase A (277 aa).

6 residues coordinate S-adenosyl-L-methionine: Asn27, Leu29, Gly54, Glu75, Asp95, and Asn118.

This sequence belongs to the class I-like SAM-binding methyltransferase superfamily. rRNA adenine N(6)-methyltransferase family. RsmA subfamily.

It is found in the cytoplasm. The enzyme catalyses adenosine(1518)/adenosine(1519) in 16S rRNA + 4 S-adenosyl-L-methionine = N(6)-dimethyladenosine(1518)/N(6)-dimethyladenosine(1519) in 16S rRNA + 4 S-adenosyl-L-homocysteine + 4 H(+). Functionally, specifically dimethylates two adjacent adenosines (A1518 and A1519) in the loop of a conserved hairpin near the 3'-end of 16S rRNA in the 30S particle. May play a critical role in biogenesis of 30S subunits. This is Ribosomal RNA small subunit methyltransferase A from Chlamydia muridarum (strain MoPn / Nigg).